The sequence spans 374 residues: uncharacterized protein (374 aa).

Positions 298–332 (TKEKLLKLHSEQKSLSEKINKLSGEKDIEQSMINN) form a coiled coil.

This is an uncharacterized protein from Acanthamoeba polyphaga (Amoeba).